Here is a 149-residue protein sequence, read N- to C-terminus: Placenta growth factor (149 aa).

The first 18 residues, 1–18 (MPTVRLFTCFLQLLTGLV), serve as a signal peptide directing secretion. Asn33 carries an N-linked (GlcNAc...) asparagine glycan. Cystine bridges form between Cys52/Cys94, Cys83/Cys128, and Cys87/Cys130. An N-linked (GlcNAc...) asparagine glycan is attached at Asn101.

This sequence belongs to the PDGF/VEGF growth factor family. As to quaternary structure, antiparallel homodimer; disulfide-linked. Also found as heterodimer with VEGFA/VEGF.

Its subcellular location is the secreted. In terms of biological role, growth factor active in angiogenesis and endothelial cell growth, stimulating their proliferation and migration. It binds to the receptor FLT1/VEGFR-1. Also promotes cell tumor growth. The polypeptide is Placenta growth factor (PGF) (Bos taurus (Bovine)).